A 429-amino-acid chain; its full sequence is Glutamate-1-semialdehyde 2,1-aminomutase (429 aa).

An N6-(pyridoxal phosphate)lysine modification is found at Lys267.

The protein belongs to the class-III pyridoxal-phosphate-dependent aminotransferase family. HemL subfamily. In terms of assembly, homodimer. Pyridoxal 5'-phosphate serves as cofactor.

It is found in the cytoplasm. The enzyme catalyses (S)-4-amino-5-oxopentanoate = 5-aminolevulinate. Its pathway is porphyrin-containing compound metabolism; protoporphyrin-IX biosynthesis; 5-aminolevulinate from L-glutamyl-tRNA(Glu): step 2/2. The sequence is that of Glutamate-1-semialdehyde 2,1-aminomutase from Herpetosiphon aurantiacus (strain ATCC 23779 / DSM 785 / 114-95).